Consider the following 85-residue polypeptide: Follicular dendritic cell secreted peptide (85 aa).

The signal sequence occupies residues 1 to 17; that stretch reads MKKVLLLITAILAVAVG. Residues 75–83 are O-glycosylated at one site; that stretch reads SAPTTPLPS.

O-glycosylated with core 1 or possibly core 8 glycans. In terms of tissue distribution, abundantly expressed in tonsil, lymph node, and trachea; strong expression in prostate; lower expression in thyroid, stomach, and colon.

The protein localises to the secreted. Its function is as follows. Can bind to the surface of B-lymphoma cells, but not T-lymphoma cells, consistent with a function as a secreted mediator acting upon B-cells. The chain is Follicular dendritic cell secreted peptide (FDCSP) from Homo sapiens (Human).